A 1238-amino-acid chain; its full sequence is MSADLQQGTTNAADFSLTVLRARIALLATAIGGPDYTSQIDPPPYKLGDDCLACLKDLKRWFKLVDDQQKRWDVAMAVAEYRILTDDLLPILIDWENKCSLAAKLAKNNPDHEEFRNKAYYDKIALNCLQLLVLMTWPLIVTEQSSSNQITLYGELKKHQLVYKKTILSMESGKVLRAAIRLALDVIKIDRLSRTPRDNMVLKLVLNFFRNVIAIEPGEFTINTKKSMPKKGITSIDTLPPNVSMDDISLNTVISSFHKNKVFGFLLTLTSSLSKEFDQDFINIPLLEIMFYFTKDVNQELLFPRQFETGTHSKVVNKNESSSANNIVTSAGFELSKLLQKEHQMRKNVIKHTSARHSRFGGLLSIQTPDKTRLTVSGSQALVDEKIALQKLDDSKKWNKRIIKKHQSVAAEGLPNSLLNSQTGKAIFFTESNGKHFKEFINNFIDSGFNILLHSVTNYFTTEQDRMVTLEQVEYLLFFAWFVKYQLLRSKIDNSADIKQVSEALKEVTFILVSSLLRSAYDLKNWTVTHAGMIAFNELLNLVSRTKAAQEEDSTDIEFIVSRLFSDERIQLLSNLPKIGSKYSLQFMKSCIELTHSVLKVLEQYSDDKTLVIEGKSRRQKKFNISEGDITKLIEEENVDRDEALDILTSSLRSIEVNFQKVQANYMTEPVIETYINFLERFRELEDDSIKKVFSFFHRVFVQAKEQALLFRFDLIILLREMLSPDGLDRMSRSRKYVSQFSDYFLARLKKRLKKSPAWFVGLLFPPLHNSEVGFYQRYGEYNVLNNESMYAAPASQFKPIPDEEALPPSILLDMKYGVLVSTLLDDGKTELLDQLLKHITHTLDIFKSWLTVNVNAGKETVNPPNEYFTLTGVLNNDPIFKDKDYRALLLLIGYSIPRKINEPCFLPGTVEVSDLTVSCELVKKYLSTPFETPNGLPSSSYLLRVRSEKDSFSHNEQDGWEGDDDYDYNDPYIVPDDQILSKSDAAYFKDLDNNASDKLKGTKFSKGIARSKKKDKRKRRKGEAKTNLPMFGDQDDERPQTVRERHGVFSKEFISDSEDDEDLMNPIFFENETYMRWLLDKNNGQLTEDRYIQFAKFAAERMNNGGVVTGDYTSLFGGSIPSIESIRATESSSFAPDKSLISLASHVASEMSIFDVNNNNNNQLSDDDVNSESRNSLGSSQPSNSQNMFQSEVYSRKESTKRSLEASAADESDEDEEAIRLFGKKSRVVLSQGDSDD.

A phosphoserine mark is found at Ser626 and Ser654. The tract at residues 1008-1051 (GIARSKKKDKRKRRKGEAKTNLPMFGDQDDERPQTVRERHGVFS) is disordered. Basic residues predominate over residues 1010 to 1023 (ARSKKKDKRKRRKG). Residues 1038–1050 (ERPQTVRERHGVF) show a composition bias toward basic and acidic residues. 2 positions are modified to phosphoserine: Ser1056 and Ser1058. The interval 1159 to 1218 (NNNNNQLSDDDVNSESRNSLGSSQPSNSQNMFQSEVYSRKESTKRSLEASAADESDEDEE) is disordered. Residues 1173 to 1194 (ESRNSLGSSQPSNSQNMFQSEV) show a composition bias toward polar residues. Positions 1195–1205 (YSRKESTKRSL) are enriched in basic and acidic residues. Over residues 1209–1218 (AADESDEDEE) the composition is skewed to acidic residues. Ser1213 is subject to Phosphoserine.

This sequence belongs to the timeless family. In terms of assembly, component of the fork protection complex (FPC) consisting of TOF1 and CSM3. Interacts with WSS1 and ESC4.

It localises to the nucleus. Forms a fork protection complex (FPC) with CSM3 and which is required for chromosome segregation during meiosis and DNA damage repair. FPC coordinates leading and lagging strand synthesis and moves with the replication fork. FPC stabilizes replication forks in a configuration that is recognized by replication checkpoint sensors and protects stalled replication forks against the fork-releasing activity of RRM3 helicase. This chain is Topoisomerase 1-associated factor 1 (TOF1), found in Saccharomyces cerevisiae (strain ATCC 204508 / S288c) (Baker's yeast).